A 117-amino-acid chain; its full sequence is Nascent polypeptide-associated complex protein (117 aa).

Residues 9–77 form the NAC-A/B domain; it reads PKQLKQMQRA…ARECDLEAEV (69 aa).

This sequence belongs to the NAC-alpha family. Homodimer. Interacts with the ribosome. Binds ribosomal RNA.

Contacts the emerging nascent chain on the ribosome. This Methanothermobacter marburgensis (strain ATCC BAA-927 / DSM 2133 / JCM 14651 / NBRC 100331 / OCM 82 / Marburg) (Methanobacterium thermoautotrophicum) protein is Nascent polypeptide-associated complex protein.